Reading from the N-terminus, the 352-residue chain is MSKQPSLSYKDAGVDIDAGEALVERIKSVAKRTARPEVMGGLGGFGALCEIPAGYKQPVLVSGTDGVGTKLRLALNLNKHDSIGIDLVAMCVNDLVVCGAEPLFFLDYYATGKLNVDTAAQVVTGIGAGCELSGCSLVGGETAEMPGMYEGEDYDLAGFCVGVVEKAEIIDGSKVAAGDALLALPSSGPHSNGYSLIRKIIEVSGADIESIQLDGKPLTDLLMAPTRIYVKPLLKLIKDTGAVKAMAHITGGGLLDNIPRVLPKGAQAVVDVASWQRPAVFDWLQEKGNVDEHEMHRVLNCGVGMVICVAQDQVENALKVLREAGEQPWVIGQIATAAEGAAQVELKNLKAH.

The protein belongs to the AIR synthase family.

The protein resides in the cytoplasm. The enzyme catalyses 2-formamido-N(1)-(5-O-phospho-beta-D-ribosyl)acetamidine + ATP = 5-amino-1-(5-phospho-beta-D-ribosyl)imidazole + ADP + phosphate + H(+). Its pathway is purine metabolism; IMP biosynthesis via de novo pathway; 5-amino-1-(5-phospho-D-ribosyl)imidazole from N(2)-formyl-N(1)-(5-phospho-D-ribosyl)glycinamide: step 2/2. This chain is Phosphoribosylformylglycinamidine cyclo-ligase, found in Pseudomonas fluorescens (strain ATCC BAA-477 / NRRL B-23932 / Pf-5).